Consider the following 251-residue polypeptide: Hydroxyacylglutathione hydrolase (251 aa).

H53, H55, D57, H58, H110, D127, and H165 together coordinate Zn(2+).

This sequence belongs to the metallo-beta-lactamase superfamily. Glyoxalase II family. As to quaternary structure, monomer. The cofactor is Zn(2+).

It carries out the reaction an S-(2-hydroxyacyl)glutathione + H2O = a 2-hydroxy carboxylate + glutathione + H(+). It functions in the pathway secondary metabolite metabolism; methylglyoxal degradation; (R)-lactate from methylglyoxal: step 2/2. Functionally, thiolesterase that catalyzes the hydrolysis of S-D-lactoyl-glutathione to form glutathione and D-lactic acid. This Buchnera aphidicola subsp. Acyrthosiphon pisum (strain APS) (Acyrthosiphon pisum symbiotic bacterium) protein is Hydroxyacylglutathione hydrolase.